The sequence spans 56 residues: MAVQQNKKSRSKRGMRRSHDSLSTAQLSVDATSGELHRRHNVTADGFYRGQKVINK.

Positions 1 to 39 are disordered; it reads MAVQQNKKSRSKRGMRRSHDSLSTAQLSVDATSGELHRR. Positions 7 to 16 are enriched in basic residues; the sequence is KKSRSKRGMR. A compositionally biased stretch (polar residues) spans 21–31; that stretch reads SLSTAQLSVDA.

The protein belongs to the bacterial ribosomal protein bL32 family.

This is Large ribosomal subunit protein bL32 from Shewanella piezotolerans (strain WP3 / JCM 13877).